The following is a 590-amino-acid chain: Acetylcholinesterase (590 aa).

An N-terminal signal peptide occupies residues 1–24 (MREMNLLVTSSLGVLLHLVVLCQA). N-linked (GlcNAc...) asparagine glycosylation occurs at N83. Residues C91 and C118 are joined by a disulfide bond. The Acyl-ester intermediate role is filled by S224. C278 and C289 are oxidised to a cystine. E351 functions as the Charge relay system in the catalytic mechanism. Cysteines 426 and 545 form a disulfide. N440 carries an N-linked (GlcNAc...) asparagine glycan. H464 (charge relay system) is an active-site residue. N-linked (GlcNAc...) asparagine glycans are attached at residues N481 and N557. S567 carries GPI-anchor amidated serine lipidation. The propeptide at 568–590 (SGTSSSKGIIFYVLFSILYLIFY) is removed in mature form.

Belongs to the type-B carboxylesterase/lipase family. As to quaternary structure, isoform H form is a homodimer; the asymmetric form is a disulfide-bonded oligomer composed of a collagenic subunit (Q) and a variable number of T catalytic subunits. In terms of processing, an interchain disulfide bond is present in what becomes position 596 of the T isoform. In terms of tissue distribution, found in the synapses and to a lower extent in extrajunctional areas of muscle and nerve, and on erythrocyte membranes.

It localises to the cell membrane. It is found in the synapse. It carries out the reaction acetylcholine + H2O = choline + acetate + H(+). Terminates signal transduction at the neuromuscular junction by rapid hydrolysis of the acetylcholine released into the synaptic cleft. May be involved in cell-cell interactions. This is Acetylcholinesterase (ache) from Torpedo marmorata (Marbled electric ray).